Consider the following 344-residue polypeptide: N-acetyl-gamma-glutamyl-phosphate reductase (344 aa).

The active site involves cysteine 150.

Belongs to the NAGSA dehydrogenase family. Type 1 subfamily.

It localises to the cytoplasm. The catalysed reaction is N-acetyl-L-glutamate 5-semialdehyde + phosphate + NADP(+) = N-acetyl-L-glutamyl 5-phosphate + NADPH + H(+). Its pathway is amino-acid biosynthesis; L-arginine biosynthesis; N(2)-acetyl-L-ornithine from L-glutamate: step 3/4. Functionally, catalyzes the NADPH-dependent reduction of N-acetyl-5-glutamyl phosphate to yield N-acetyl-L-glutamate 5-semialdehyde. The sequence is that of N-acetyl-gamma-glutamyl-phosphate reductase from Pseudomonas savastanoi pv. phaseolicola (strain 1448A / Race 6) (Pseudomonas syringae pv. phaseolicola (strain 1448A / Race 6)).